Reading from the N-terminus, the 438-residue chain is Glutamate-1-semialdehyde 2,1-aminomutase (438 aa).

Lys278 carries the N6-(pyridoxal phosphate)lysine modification.

The protein belongs to the class-III pyridoxal-phosphate-dependent aminotransferase family. HemL subfamily. In terms of assembly, homodimer. Requires pyridoxal 5'-phosphate as cofactor.

The protein resides in the cytoplasm. The catalysed reaction is (S)-4-amino-5-oxopentanoate = 5-aminolevulinate. The protein operates within porphyrin-containing compound metabolism; protoporphyrin-IX biosynthesis; 5-aminolevulinate from L-glutamyl-tRNA(Glu): step 2/2. The sequence is that of Glutamate-1-semialdehyde 2,1-aminomutase from Delftia acidovorans (strain DSM 14801 / SPH-1).